A 469-amino-acid polypeptide reads, in one-letter code: Glutamine synthetase (469 aa).

The GS beta-grasp domain occupies 13–97 (NEVKFVDLRF…IRCDILEPAT (85 aa)). Positions 105 to 469 (PRSIAKRAEE…PLEFELYYSV (365 aa)) constitute a GS catalytic domain. Residues Glu-130 and Glu-132 each coordinate Mg(2+). An ATP-binding site is contributed by Glu-208. Residues Glu-213 and Glu-221 each contribute to the Mg(2+) site. Residues 265 to 266 (NG) and Gly-266 contribute to the L-glutamate site. Position 270 (His-270) interacts with Mg(2+). Residues 272 to 274 (HQS) and Ser-274 contribute to the ATP site. Arg-322, Glu-328, and Arg-340 together coordinate L-glutamate. 3 residues coordinate ATP: Arg-340, Arg-345, and Lys-353. Glu-358 is a binding site for Mg(2+). L-glutamate is bound at residue Arg-360. Tyr-398 bears the O-AMP-tyrosine mark.

The protein belongs to the glutamine synthetase family. In terms of assembly, oligomer of 12 subunits arranged in the form of two hexameric ring. The cofactor is Mg(2+).

It is found in the cytoplasm. It carries out the reaction L-glutamate + NH4(+) + ATP = L-glutamine + ADP + phosphate + H(+). With respect to regulation, the activity of this enzyme could be controlled by adenylation under conditions of abundant glutamine. Functionally, catalyzes the ATP-dependent biosynthesis of glutamine from glutamate and ammonia. The protein is Glutamine synthetase (glnAv) of Vibrio cholerae serotype O1 (strain ATCC 39315 / El Tor Inaba N16961).